A 371-amino-acid chain; its full sequence is MSSFSYAEAGVIGALQGATELFPVSSLGHSVLVPALIGGRWAADLDVSAPESPYLAFIVAVHVATAAALIVAFRDDWRRIITGLAVSVRDRRVTTADGRLAWLIILGTVPVGIVGLLLEHPLRTHLGRPLPAAVFLTVNGMIMLLGERLRRRSTTRGAPGPAGYRDEHTMPIPRSAPVTGRRVGTRPASGPLVAHGSAPGSGPGNHSKAVTTETALPEAEDVTLPEAETALPEAETAARHADRRLAALPRLDALLVGVAQTAALAPGISRSGVTMIAGLSRGLSHLDAARFAFLLATPVILAAGLLKLPDLLGPLGDGVRGQTLFGAIVAGVVAYVSIRFLARWFETRTATPFAVYCLVAGALCVVRFGIF.

3 consecutive transmembrane segments (helical) span residues 53–73 (PYLA…IVAF), 100–120 (LAWL…LLEH), and 126–146 (LGRP…MLLG). Residues 152–226 (RSTTRGAPGP…PEAEDVTLPE (75 aa)) form a disordered region. The next 3 helical transmembrane spans lie at 291-311 (FAFL…LPDL), 322-342 (QTLF…RFLA), and 351-371 (TPFA…FGIF).

The protein belongs to the UppP family.

The protein resides in the cell membrane. It carries out the reaction di-trans,octa-cis-undecaprenyl diphosphate + H2O = di-trans,octa-cis-undecaprenyl phosphate + phosphate + H(+). In terms of biological role, catalyzes the dephosphorylation of undecaprenyl diphosphate (UPP). Confers resistance to bacitracin. The protein is Undecaprenyl-diphosphatase 1 of Frankia casuarinae (strain DSM 45818 / CECT 9043 / HFP020203 / CcI3).